The following is a 367-amino-acid chain: MQFNPTLDSIKTYEAGKPIELVVREYGIKPQNVIKLASNENPFGASPKVIEAIAKEAVNAHRYPDDSMFELKEGLAGRFGVKSENVIIGSGSDQILEMAVHAKCNASSKVLMSKTTFAMYDVYSRQVGARILRTPSDQHHLGEFWEIYQKERPEILFLCLPNNPLGECLDREEVYDFLQKIDDETLVIVDGAYQEYAAFKDSQKRIDPKDLIERFPSSIFLGTFSKAFGLGGMRVGYGIAQPSIIQALMKMRAPFNITTLSLKAAIEALKESAYVEETIKENFKEMRRYEEFALAQGIDFIPSYTNFITLLLKNRVDSSEFSQWLLERGLIVRNLKSYGINAIRITIGRSLENDRCFELMQEYLHQF.

Lys226 bears the N6-(pyridoxal phosphate)lysine mark.

This sequence belongs to the class-II pyridoxal-phosphate-dependent aminotransferase family. Histidinol-phosphate aminotransferase subfamily. As to quaternary structure, homodimer. The cofactor is pyridoxal 5'-phosphate.

It catalyses the reaction L-histidinol phosphate + 2-oxoglutarate = 3-(imidazol-4-yl)-2-oxopropyl phosphate + L-glutamate. It functions in the pathway amino-acid biosynthesis; L-histidine biosynthesis; L-histidine from 5-phospho-alpha-D-ribose 1-diphosphate: step 7/9. The sequence is that of Histidinol-phosphate aminotransferase from Wolinella succinogenes (strain ATCC 29543 / DSM 1740 / CCUG 13145 / JCM 31913 / LMG 7466 / NCTC 11488 / FDC 602W) (Vibrio succinogenes).